Reading from the N-terminus, the 387-residue chain is S-adenosylmethionine synthase (387 aa).

Residue His16 participates in ATP binding. Residue Asp18 coordinates Mg(2+). Residue Glu44 coordinates K(+). Positions 57 and 100 each coordinate L-methionine. Residues 100 to 110 form a flexible loop region; it reads QSPDIAQGVDR. Residues 167–169, 232–233, Asp241, 247–248, Ala264, and Lys268 contribute to the ATP site; these read DAK, RF, and RK. Position 241 (Asp241) interacts with L-methionine. Residue Lys272 coordinates L-methionine.

It belongs to the AdoMet synthase family. In terms of assembly, homotetramer; dimer of dimers. Requires Mg(2+) as cofactor. K(+) is required as a cofactor.

The protein resides in the cytoplasm. It carries out the reaction L-methionine + ATP + H2O = S-adenosyl-L-methionine + phosphate + diphosphate. The protein operates within amino-acid biosynthesis; S-adenosyl-L-methionine biosynthesis; S-adenosyl-L-methionine from L-methionine: step 1/1. Functionally, catalyzes the formation of S-adenosylmethionine (AdoMet) from methionine and ATP. The overall synthetic reaction is composed of two sequential steps, AdoMet formation and the subsequent tripolyphosphate hydrolysis which occurs prior to release of AdoMet from the enzyme. In Cupriavidus necator (strain ATCC 17699 / DSM 428 / KCTC 22496 / NCIMB 10442 / H16 / Stanier 337) (Ralstonia eutropha), this protein is S-adenosylmethionine synthase.